The chain runs to 426 residues: Serine/threonine-protein kinase ssn3 (426 aa).

The region spanning 41–368 (YHIVGFISSG…AQEALEHPYF (328 aa)) is the Protein kinase domain. ATP-binding positions include 47-55 (ISSGTYGRV) and Lys-71. The Proton acceptor role is filled by Asp-173. The disordered stretch occupies residues 390–426 (RVTQDDNDIRSGSLPGTKRSGLPDDSLMGRAAKRLKE).

It belongs to the protein kinase superfamily. CMGC Ser/Thr protein kinase family. CDC2/CDKX subfamily. In terms of assembly, component of the srb8-11 complex, a regulatory module of the Mediator complex. The cofactor is Mg(2+).

The protein localises to the nucleus. The catalysed reaction is L-seryl-[protein] + ATP = O-phospho-L-seryl-[protein] + ADP + H(+). It carries out the reaction L-threonyl-[protein] + ATP = O-phospho-L-threonyl-[protein] + ADP + H(+). It catalyses the reaction [DNA-directed RNA polymerase] + ATP = phospho-[DNA-directed RNA polymerase] + ADP + H(+). In terms of biological role, component of the srb8-11 complex. The srb8-11 complex is a regulatory module of the Mediator complex which is itself involved in regulation of basal and activated RNA polymerase II-dependent transcription. The srb8-11 complex may be involved in the transcriptional repression of a subset of genes regulated by Mediator. It may inhibit the association of the Mediator complex with RNA polymerase II to form the holoenzyme complex. The srb8-11 complex phosphorylates the C-terminal domain (CTD) of the largest subunit of RNA polymerase II. The sequence is that of Serine/threonine-protein kinase ssn3 (ssn3) from Aspergillus clavatus (strain ATCC 1007 / CBS 513.65 / DSM 816 / NCTC 3887 / NRRL 1 / QM 1276 / 107).